The sequence spans 188 residues: Transmembrane protein 160 (188 aa).

The N-terminal 96 residues, 1-96, are a transit peptide targeting the mitochondrion; sequence MGGGWWWARA…ISFMQSDMGR (96 aa). Residues 24–52 are disordered; sequence PPQRPRSGGARGSFAPGHGPRAGASPPPV. Ser48 is modified (phosphoserine). Transmembrane regions (helical) follow at residues 102–122 and 135–155; these read FFLL…VGLA and AAVG…AVGL. The segment at 168 to 188 is disordered; sequence PEDDGTASAEGPDEAGRPPPE.

This sequence belongs to the TMEM160 family.

The protein resides in the mitochondrion inner membrane. This is Transmembrane protein 160 from Homo sapiens (Human).